The sequence spans 240 residues: Epoxyqueuosine reductase QueH (240 aa).

C43, C44, C129, and C132 together coordinate [4Fe-4S] cluster. A disulfide bridge links C211 with C213.

This sequence belongs to the QueH family.

The catalysed reaction is epoxyqueuosine(34) in tRNA + AH2 = queuosine(34) in tRNA + A + H2O. The protein operates within tRNA modification; tRNA-queuosine biosynthesis. Its function is as follows. Catalyzes the conversion of epoxyqueuosine (oQ) to queuosine (Q), which is a hypermodified base found in the wobble positions of tRNA(Asp), tRNA(Asn), tRNA(His) and tRNA(Tyr). The polypeptide is Epoxyqueuosine reductase QueH (Staphylococcus aureus (strain Mu50 / ATCC 700699)).